A 539-amino-acid polypeptide reads, in one-letter code: T-complex protein 1 subunit zeta (539 aa).

This sequence belongs to the TCP-1 chaperonin family. Heterooligomeric complex of about 850 to 900 kDa that forms two stacked rings, 12 to 16 nm in diameter.

The protein localises to the cytoplasm. Its function is as follows. Molecular chaperone; assists the folding of proteins upon ATP hydrolysis. Known to play a role, in vitro, in the folding of actin and tubulin. The protein is T-complex protein 1 subunit zeta (cct6) of Dictyostelium discoideum (Social amoeba).